We begin with the raw amino-acid sequence, 176 residues long: Nucleoside triphosphate/diphosphate phosphatase (176 aa).

The Proton donor role is filled by arginine 23. Residues asparagine 87, aspartate 103, aspartate 105, aspartate 107, aspartate 120, and glutamate 123 each coordinate Mg(2+).

This sequence belongs to the Ntdp family. The cofactor is Mg(2+).

The enzyme catalyses a ribonucleoside 5'-triphosphate + H2O = a ribonucleoside 5'-diphosphate + phosphate + H(+). It carries out the reaction a ribonucleoside 5'-diphosphate + H2O = a ribonucleoside 5'-phosphate + phosphate + H(+). Its function is as follows. Has nucleoside phosphatase activity towards nucleoside triphosphates and nucleoside diphosphates. The chain is Nucleoside triphosphate/diphosphate phosphatase from Bacillus anthracis (strain A0248).